Here is a 775-residue protein sequence, read N- to C-terminus: Glutamine--tRNA ligase (775 aa).

An N-acetylalanine modification is found at A2. S70 is modified (phosphoserine). A 'HIGH' region motif is present at residues 270 to 280 (PEPNGILHIGH). ATP is bound by residues 271–273 (EPN) and 277–283 (HIGHAKA). Residue D303 coordinates L-glutamine. K309 bears the N6-acetyllysine mark. Y438 provides a ligand contact to L-glutamine. ATP is bound by residues T457, 486–487 (RL), and 494–496 (VSK). The short motif at 493-497 (VVSKR) is the 'KMSKS' region element. S495 bears the Phosphoserine mark.

The protein belongs to the class-I aminoacyl-tRNA synthetase family. As to quaternary structure, monomer. Part of a multisubunit complex that groups tRNA ligases for Arg (RARS1), Asp (DARS1), Gln (QARS1), Ile (IARS1), Leu (LARS1), Lys (KARS1), Met (MARS1) the bifunctional ligase for Glu and Pro (EPRS1) and the auxiliary subunits AIMP1/p43, AIMP2/p38 and EEF1E1/p18. Interacts with RARS1. Part of a complex composed of RARS1, QARS1 and AIMP1.

Its subcellular location is the cytoplasm. The protein resides in the cytosol. The enzyme catalyses tRNA(Gln) + L-glutamine + ATP = L-glutaminyl-tRNA(Gln) + AMP + diphosphate. In terms of biological role, glutamine--tRNA ligase. Plays a critical role in brain development. The chain is Glutamine--tRNA ligase (QARS1) from Bos taurus (Bovine).